The following is a 129-amino-acid chain: Glyoxalase domain-containing protein 5 homolog (129 aa).

One can recognise a VOC domain in the interval 5–128 (RLDHLVLTVS…DYNLIEISNY (124 aa)).

This sequence belongs to the glyoxalase I family.

This chain is Glyoxalase domain-containing protein 5 homolog (glod5), found in Dictyostelium discoideum (Social amoeba).